The primary structure comprises 343 residues: Flavonoid 4'-O-methyltransferase 4 (343 aa).

Asp-211 provides a ligand contact to S-adenosyl-L-methionine. His-249 serves as the catalytic Proton acceptor.

This sequence belongs to the class I-like SAM-binding methyltransferase superfamily. Cation-independent O-methyltransferase family. In terms of assembly, homodimer.

It catalyses the reaction apigenin + S-adenosyl-L-methionine = acacetin + S-adenosyl-L-homocysteine + H(+). It carries out the reaction kaempferol + S-adenosyl-L-methionine = kaempferide + S-adenosyl-L-homocysteine + H(+). The enzyme catalyses isorhamnetin + S-adenosyl-L-methionine = 3',4'-O-dimethylquercetin + S-adenosyl-L-homocysteine + 2 H(+). The catalysed reaction is scutellarein + S-adenosyl-L-methionine = scutellarein 4'-methyl ether + S-adenosyl-L-homocysteine + H(+). It catalyses the reaction (2S)-naringenin + S-adenosyl-L-methionine = (2S)-naringenin 4'-methyl ether + S-adenosyl-L-homocysteine + H(+). It carries out the reaction 4',7,8-trihydroxyflavone + S-adenosyl-L-methionine = 7,8-dihydroxy-4'-methoxyflavone + S-adenosyl-L-homocysteine + H(+). The enzyme catalyses taxifolin + S-adenosyl-L-methionine = taxifolin 4'-methyl ether + S-adenosyl-L-homocysteine + H(+). It participates in flavonoid metabolism. In terms of biological role, flavonoid 4'-O-methyltransferase involved in the biosynthesis of polymethoxylated flavonoids natural products such as pebrellin, aroma compounds which contribute to the flavor of peppermint, and exhibit pharmacological activities such as anti-allergic, anti-oxidant, antibacterial, anti-proliferative, and anti-inflammatory effects. Catalyzes S-adenosylmethionine-dependent regioselective 4'-O-methylation of flavonoids; active on various hydroxylated flavonoid substrates, including isorhamnetin, kaempferol, apigenin (API), scutellarein (6-hydroxy-apigenin, 6-OH-API, SCU), taxifolin, 7,8,4'-trihydroxy-flavone and naringenin (NAR), and, with a lower efficiency, quercetin, rhamnetin, luteolin (LUT) and 7,8,3',4'-tetrahydroxy-flavone. The polypeptide is Flavonoid 4'-O-methyltransferase 4 (Mentha piperita (Peppermint)).